A 421-amino-acid chain; its full sequence is MTATTAESGRPDQPPTAEAGRPVRLTLTRRAGRAPRHLADLTRQERRDVAVSLGQPAFRADQVARHYYARLIAADEPEAMTDLPERDRQPLLDALLPRLLVPVRTLSCDDGLTRKTAWRTVDGASLESVIMRYPDRATVCVSSQAGCGMGCPFCATGQGGLTRNLSTAEIVEQVVHAARVLRRRELAGGETRLSNVVFMGMGEPLANYAAVIAALRRLTAHPPEGLGLSARGLTVSTVGLVPAIRRLAGEGLPVTLAVSLHAPDDVLRNELVPINTRWPVVEVLAAAWEYAEVTGRRVSVEYALIDGVNDDVGRADALADLLVGRLAHVNLIPLNPTGGSSWRASAPAGQRAFVRRLRDRGIVTTVRDTRGREIAAACGQLAAEPAGKPERTDRPEQVGSDRLVEFGAVGSTTPDGDRVLR.

The interval 1–23 (MTATTAESGRPDQPPTAEAGRPV) is disordered. Glu127 (proton acceptor) is an active-site residue. Residues 133–372 (YPDRATVCVS…VTTVRDTRGR (240 aa)) enclose the Radical SAM core domain. Cys140 and Cys378 form a disulfide bridge. Cys147, Cys151, and Cys154 together coordinate [4Fe-4S] cluster. Residues 202-203 (GE), Ser236, 259-261 (SLH), and Asn335 each bind S-adenosyl-L-methionine. Cys378 (S-methylcysteine intermediate) is an active-site residue. A disordered region spans residues 383 to 421 (AEPAGKPERTDRPEQVGSDRLVEFGAVGSTTPDGDRVLR). The segment covering 387–396 (GKPERTDRPE) has biased composition (basic and acidic residues).

This sequence belongs to the radical SAM superfamily. RlmN family. Requires [4Fe-4S] cluster as cofactor.

The protein localises to the cytoplasm. It carries out the reaction adenosine(2503) in 23S rRNA + 2 reduced [2Fe-2S]-[ferredoxin] + 2 S-adenosyl-L-methionine = 2-methyladenosine(2503) in 23S rRNA + 5'-deoxyadenosine + L-methionine + 2 oxidized [2Fe-2S]-[ferredoxin] + S-adenosyl-L-homocysteine. The enzyme catalyses adenosine(37) in tRNA + 2 reduced [2Fe-2S]-[ferredoxin] + 2 S-adenosyl-L-methionine = 2-methyladenosine(37) in tRNA + 5'-deoxyadenosine + L-methionine + 2 oxidized [2Fe-2S]-[ferredoxin] + S-adenosyl-L-homocysteine. Functionally, specifically methylates position 2 of adenine 2503 in 23S rRNA and position 2 of adenine 37 in tRNAs. This chain is Probable dual-specificity RNA methyltransferase RlmN, found in Frankia casuarinae (strain DSM 45818 / CECT 9043 / HFP020203 / CcI3).